The chain runs to 129 residues: Ig lambda-1 chain V regions MOPC 104E/RPC20/J558/S104 (129 aa).

The N-terminal stretch at 1 to 19 (MAWISLILSLLALSSGAIS) is a signal peptide. Glutamine 20 is modified (pyrrolidone carboxylic acid). An Ig-like domain is found at 20 to 125 (QAVVTQESAL…HWVFGGGTKL (106 aa)).

This is Ig lambda-1 chain V regions MOPC 104E/RPC20/J558/S104 from Mus musculus (Mouse).